A 73-amino-acid polypeptide reads, in one-letter code: Cell division protein ZapB (73 aa).

Residues 3 to 67 (LELLSKLETK…WNDKVTGLVG (65 aa)) adopt a coiled-coil conformation.

This sequence belongs to the ZapB family. Homodimer. The ends of the coiled-coil dimer bind to each other, forming polymers. Interacts with FtsZ.

It is found in the cytoplasm. Functionally, non-essential, abundant cell division factor that is required for proper Z-ring formation. It is recruited early to the divisome by direct interaction with FtsZ, stimulating Z-ring assembly and thereby promoting cell division earlier in the cell cycle. Its recruitment to the Z-ring requires functional FtsA or ZipA. The protein is Cell division protein ZapB of Shewanella sp. (strain MR-4).